A 288-amino-acid polypeptide reads, in one-letter code: Transmembrane and coiled-coil domain-containing protein 5A (288 aa).

Positions 10–189 (KKNIISLNMD…ELETGYLERE (180 aa)) form a coiled coil. The chain crosses the membrane as a helical span at residues 227 to 249 (SLLFSTLFFIRLLGYLIFHLSFI).

Belongs to the TMCO5 family. As to expression, only detected in testis (at protein level).

It is found in the endoplasmic reticulum membrane. The protein resides in the nucleus membrane. The chain is Transmembrane and coiled-coil domain-containing protein 5A (Tmco5a) from Mus musculus (Mouse).